The chain runs to 118 residues: Ribosome-binding factor A (118 aa).

It belongs to the RbfA family. Monomer. Binds 30S ribosomal subunits, but not 50S ribosomal subunits or 70S ribosomes.

It is found in the cytoplasm. Functionally, one of several proteins that assist in the late maturation steps of the functional core of the 30S ribosomal subunit. Associates with free 30S ribosomal subunits (but not with 30S subunits that are part of 70S ribosomes or polysomes). Required for efficient processing of 16S rRNA. May interact with the 5'-terminal helix region of 16S rRNA. This chain is Ribosome-binding factor A, found in Bacillus thuringiensis (strain Al Hakam).